We begin with the raw amino-acid sequence, 176 residues long: Small ribosomal subunit protein uS5 (176 aa).

The S5 DRBM domain maps to 11 to 74 (LSEVLVDVNR…QAAKKRMMKV (64 aa)).

This sequence belongs to the universal ribosomal protein uS5 family. As to quaternary structure, part of the 30S ribosomal subunit. Contacts proteins S4 and S8.

Functionally, with S4 and S12 plays an important role in translational accuracy. Its function is as follows. Located at the back of the 30S subunit body where it stabilizes the conformation of the head with respect to the body. The chain is Small ribosomal subunit protein uS5 from Rickettsia rickettsii (strain Iowa).